The primary structure comprises 138 residues: MENATVPNDQNEDYIDLTKPMSKSYWKKMKVKGFYRWVLVRDFKKINDILNTNEIVPILVSGAKTFTKSRFSAMRWSLNEFAFVDGFFFLLLFFFYKKKKRSKISNTSKRKKRTKKKRTRNLGNLCFLRKNLASILFF.

It localises to the plastid. Its subcellular location is the chloroplast. This is an uncharacterized protein from Chlorella vulgaris (Green alga).